We begin with the raw amino-acid sequence, 342 residues long: Phospho-N-acetylmuramoyl-pentapeptide-transferase (342 aa).

The next 10 membrane-spanning stretches (helical) occupy residues 8 to 28 (VAQP…VIAP), 58 to 78 (GIPS…TAIF), 86 to 106 (IWVI…DDYL), 116 to 136 (ISLE…LIFL), 152 to 172 (GLID…VGSS), 184 to 204 (LATL…HLSL), 213 to 233 (VVGA…LSFL), 242 to 262 (VFMG…MSVM), 267 to 287 (FIYA…MAQV), and 318 to 338 (IVTR…AAII).

The protein belongs to the glycosyltransferase 4 family. MraY subfamily. The cofactor is Mg(2+).

Its subcellular location is the cell inner membrane. The enzyme catalyses UDP-N-acetyl-alpha-D-muramoyl-L-alanyl-gamma-D-glutamyl-meso-2,6-diaminopimeloyl-D-alanyl-D-alanine + di-trans,octa-cis-undecaprenyl phosphate = di-trans,octa-cis-undecaprenyl diphospho-N-acetyl-alpha-D-muramoyl-L-alanyl-D-glutamyl-meso-2,6-diaminopimeloyl-D-alanyl-D-alanine + UMP. It participates in cell wall biogenesis; peptidoglycan biosynthesis. Catalyzes the initial step of the lipid cycle reactions in the biosynthesis of the cell wall peptidoglycan: transfers peptidoglycan precursor phospho-MurNAc-pentapeptide from UDP-MurNAc-pentapeptide onto the lipid carrier undecaprenyl phosphate, yielding undecaprenyl-pyrophosphoryl-MurNAc-pentapeptide, known as lipid I. This is Phospho-N-acetylmuramoyl-pentapeptide-transferase from Anaplasma marginale (strain Florida).